The following is a 311-amino-acid chain: Coproporphyrin III ferrochelatase 1 (311 aa).

Fe-coproporphyrin III is bound by residues tyrosine 12, arginine 29, 45–46 (RY), serine 53, and tyrosine 124. Fe(2+) contacts are provided by histidine 182 and glutamate 263.

This sequence belongs to the ferrochelatase family.

It localises to the cytoplasm. The enzyme catalyses Fe-coproporphyrin III + 2 H(+) = coproporphyrin III + Fe(2+). It functions in the pathway porphyrin-containing compound metabolism; protoheme biosynthesis. Its function is as follows. Involved in coproporphyrin-dependent heme b biosynthesis. Catalyzes the insertion of ferrous iron into coproporphyrin III to form Fe-coproporphyrin III. The chain is Coproporphyrin III ferrochelatase 1 from Bacillus cereus (strain ZK / E33L).